The following is a 215-amino-acid chain: MDRDTFAARIDHTVLGPETAPGDVEAVLDAAAEYGMNACVPPCYVEAASDYAPDVTLVSVCGFPHGQHATETKATEAETVWQAGADEIDVVINVGRLRGGDTDAVRAEIEQVVAAVPVPVKVIVEAPLLSASELRTACELAADADAAYLKTATGFNGDATVAAVETMAEYLPVKASGGIGSFEAAVEMFDAGADRIGASAGAAIVDGFDPAAFET.

The Proton donor/acceptor role is filled by Asp89. Catalysis depends on Lys150, which acts as the Schiff-base intermediate with acetaldehyde. Residue Lys174 is the Proton donor/acceptor of the active site.

The protein belongs to the DeoC/FbaB aldolase family. DeoC type 1 subfamily.

The protein resides in the cytoplasm. It catalyses the reaction 2-deoxy-D-ribose 5-phosphate = D-glyceraldehyde 3-phosphate + acetaldehyde. The protein operates within carbohydrate degradation; 2-deoxy-D-ribose 1-phosphate degradation; D-glyceraldehyde 3-phosphate and acetaldehyde from 2-deoxy-alpha-D-ribose 1-phosphate: step 2/2. Catalyzes a reversible aldol reaction between acetaldehyde and D-glyceraldehyde 3-phosphate to generate 2-deoxy-D-ribose 5-phosphate. The chain is Deoxyribose-phosphate aldolase from Natronomonas pharaonis (strain ATCC 35678 / DSM 2160 / CIP 103997 / JCM 8858 / NBRC 14720 / NCIMB 2260 / Gabara) (Halobacterium pharaonis).